The sequence spans 266 residues: Ribosomal RNA small subunit methyltransferase A (266 aa).

6 residues coordinate S-adenosyl-L-methionine: asparagine 10, isoleucine 12, glycine 37, glutamate 58, aspartate 82, and asparagine 105.

The protein belongs to the class I-like SAM-binding methyltransferase superfamily. rRNA adenine N(6)-methyltransferase family. RsmA subfamily.

The protein localises to the cytoplasm. The catalysed reaction is adenosine(1518)/adenosine(1519) in 16S rRNA + 4 S-adenosyl-L-methionine = N(6)-dimethyladenosine(1518)/N(6)-dimethyladenosine(1519) in 16S rRNA + 4 S-adenosyl-L-homocysteine + 4 H(+). Functionally, specifically dimethylates two adjacent adenosines (A1518 and A1519) in the loop of a conserved hairpin near the 3'-end of 16S rRNA in the 30S particle. May play a critical role in biogenesis of 30S subunits. The protein is Ribosomal RNA small subunit methyltransferase A of Mycoplasma capricolum subsp. capricolum (strain California kid / ATCC 27343 / NCTC 10154).